Consider the following 65-residue polypeptide: MPDVKCVCCKEGNECACTGQDCCTIGKCCKDGTCCGKCSNAACKTCADGCTCGSGCSCTEGNCPC.

This sequence belongs to the metallothionein superfamily. Type 4 family.

Its function is as follows. Metallothioneins have a high content of cysteine residues that bind various heavy metals. The polypeptide is Metallothionein-B (MTB1) (Strongylocentrotus purpuratus (Purple sea urchin)).